A 242-amino-acid polypeptide reads, in one-letter code: Probable transcriptional regulatory protein XCC3027 (242 aa).

Belongs to the TACO1 family.

The protein localises to the cytoplasm. This chain is Probable transcriptional regulatory protein XCC3027, found in Xanthomonas campestris pv. campestris (strain ATCC 33913 / DSM 3586 / NCPPB 528 / LMG 568 / P 25).